The chain runs to 205 residues: MIGKLKGTIDEIGEDHVVLDVHGVGYVAHCSARTLGKLGSAGEAAVLFIETYVREDQLKLFGFLSALEREWFRLLQSVQGVGSKVALAVLSTLTPGELANAIALQDKTSISRAPGVGPKVAVRIVTELKNKAPAFSGEMAPSIGLKQELGEGVAAAPVADAVSALTNLGYSRDQAANAVAAALKNGGEGGDSAKLIRLGLKELSR.

The tract at residues 1–64 (MIGKLKGTID…EDQLKLFGFL (64 aa)) is domain I. Positions 65–143 (SALEREWFRL…AFSGEMAPSI (79 aa)) are domain II. The flexible linker stretch occupies residues 144–153 (GLKQELGEGV). Positions 153–205 (VAAAPVADAVSALTNLGYSRDQAANAVAAALKNGGEGGDSAKLIRLGLKELSR) are domain III.

Belongs to the RuvA family. Homotetramer. Forms an RuvA(8)-RuvB(12)-Holliday junction (HJ) complex. HJ DNA is sandwiched between 2 RuvA tetramers; dsDNA enters through RuvA and exits via RuvB. An RuvB hexamer assembles on each DNA strand where it exits the tetramer. Each RuvB hexamer is contacted by two RuvA subunits (via domain III) on 2 adjacent RuvB subunits; this complex drives branch migration. In the full resolvosome a probable DNA-RuvA(4)-RuvB(12)-RuvC(2) complex forms which resolves the HJ.

The protein resides in the cytoplasm. Functionally, the RuvA-RuvB-RuvC complex processes Holliday junction (HJ) DNA during genetic recombination and DNA repair, while the RuvA-RuvB complex plays an important role in the rescue of blocked DNA replication forks via replication fork reversal (RFR). RuvA specifically binds to HJ cruciform DNA, conferring on it an open structure. The RuvB hexamer acts as an ATP-dependent pump, pulling dsDNA into and through the RuvAB complex. HJ branch migration allows RuvC to scan DNA until it finds its consensus sequence, where it cleaves and resolves the cruciform DNA. The sequence is that of Holliday junction branch migration complex subunit RuvA from Rhizobium meliloti (strain 1021) (Ensifer meliloti).